The chain runs to 370 residues: Anhydro-N-acetylmuramic acid kinase (370 aa).

12 to 19 contributes to the ATP binding site; sequence GTSLDGVD.

It belongs to the anhydro-N-acetylmuramic acid kinase family.

The catalysed reaction is 1,6-anhydro-N-acetyl-beta-muramate + ATP + H2O = N-acetyl-D-muramate 6-phosphate + ADP + H(+). The protein operates within amino-sugar metabolism; 1,6-anhydro-N-acetylmuramate degradation. It functions in the pathway cell wall biogenesis; peptidoglycan recycling. Catalyzes the specific phosphorylation of 1,6-anhydro-N-acetylmuramic acid (anhMurNAc) with the simultaneous cleavage of the 1,6-anhydro ring, generating MurNAc-6-P. Is required for the utilization of anhMurNAc either imported from the medium or derived from its own cell wall murein, and thus plays a role in cell wall recycling. This chain is Anhydro-N-acetylmuramic acid kinase, found in Pectobacterium atrosepticum (strain SCRI 1043 / ATCC BAA-672) (Erwinia carotovora subsp. atroseptica).